Reading from the N-terminus, the 365-residue chain is MMKKNLMLIFGGVSFEHEISLRSAYGIYSALMKLDKYNLYPSFIDKITGIWYLLDSVPDAPELIKRDSSAIISLIPGCGIFVNDEDLEIDVVFPIVHGRTGEDGAIQGFLKMMDIPCVGAGILGSAISINKYFCKLLLKSFNIPLVPFIGFRKYDYFLDKEGIKKDIKQSLNYPVIVKPAMLGSSIGISIAYNDTQIEKCIEEAFEYDLTVVVEKFMKVREIECSVIGNEQIKIFTPGEIVVQDFVFYDYDAKYSTIPGNSVVFNIPARLDMKHLLDIKEYAFLTYKCLELRGMARIDFLIEKDTNLIYVNEINTIPGFTDISMFSKMCEHDGLDYESLVDNLVSLAFQSYAKRKERIDFKRLEN.

In terms of domain architecture, ATP-grasp spans 135-345 (KLLLKSFNIP…YESLVDNLVS (211 aa)). An ATP-binding site is contributed by 168–223 (KQSLNYPVIVKPAMLGSSIGISIAYNDTQIEKCIEEAFEYDLTVVVEKFMKVREIE). The Mg(2+) site is built by Asp-298, Glu-312, and Asn-314.

This sequence belongs to the D-alanine--D-alanine ligase family. Requires Mg(2+) as cofactor. Mn(2+) is required as a cofactor.

It is found in the cytoplasm. The enzyme catalyses 2 D-alanine + ATP = D-alanyl-D-alanine + ADP + phosphate + H(+). It participates in cell wall biogenesis; peptidoglycan biosynthesis. In terms of biological role, cell wall formation. In Borrelia hermsii (strain HS1 / DAH), this protein is D-alanine--D-alanine ligase.